Here is a 351-residue protein sequence, read N- to C-terminus: D-alanine--D-alanine ligase (351 aa).

One can recognise an ATP-grasp domain in the interval 135 to 343; that stretch reads NQIFLQSGQK…MEEVFSDLIE (209 aa). An ATP-binding site is contributed by 167–222; it reads LETLGFPQFLKPVEGGSSVSVYKITNREQLKEKLALIFESDSKVMSQSFLTGIEVS. Aspartate 298, glutamate 310, and asparagine 312 together coordinate Mg(2+).

It belongs to the D-alanine--D-alanine ligase family. Requires Mg(2+) as cofactor. The cofactor is Mn(2+).

The protein localises to the cytoplasm. It catalyses the reaction 2 D-alanine + ATP = D-alanyl-D-alanine + ADP + phosphate + H(+). It participates in cell wall biogenesis; peptidoglycan biosynthesis. Cell wall formation. This is D-alanine--D-alanine ligase from Leptospira interrogans serogroup Icterohaemorrhagiae serovar Lai (strain 56601).